We begin with the raw amino-acid sequence, 154 residues long: MAARLCCQLDPARDVLCLRPVGAESRGRPFSGPLGTLPSPSSSAVPADHGAHLSLRGLPVCAFSSAGPCALRFTFARRMETTVNAHQVLPKVLHKRTLGLSAMSTTDLEAYFKDCVFKDWEELGEEIRLKVFVLGGCRHKLVCSPAPCNFFTSA.

The interval 68-117 (PCALRFTFARRMETTVNAHQVLPKVLHKRTLGLSAMSTTDLEAYFKDCVF) is mitochondrial targeting sequence.

Belongs to the orthohepadnavirus protein X family. May form homodimer. May interact with host CEBPA, CFLAR, CREB1, DDB1, E4F1, HBXIP, HSPD1/HSP60, NFKBIA, POLR2E and SMAD4. Interacts with host SMC5-SMC6 complex and induces its degradation. Interacts with host TRPC4AP; leading to prevent ubiquitination of TRPC4AP. Interacts with host PLSCR1; this interaction promotes ubiquitination and degradation of HBx and impairs HBx-mediated cell proliferation. A fraction may be phosphorylated in insect cells and HepG2 cells, a human hepatoblastoma cell line. Phosphorylated in vitro by host protein kinase C or mitogen-activated protein kinase. N-acetylated in insect cells.

It is found in the host cytoplasm. The protein resides in the host nucleus. Its subcellular location is the host mitochondrion. In terms of biological role, multifunctional protein that plays a role in silencing host antiviral defenses and promoting viral transcription. Does not seem to be essential for HBV infection. May be directly involved in development of cirrhosis and liver cancer (hepatocellular carcinoma). Most of cytosolic activities involve modulation of cytosolic calcium. The effect on apoptosis is controversial depending on the cell types in which the studies have been conducted. May induce apoptosis by localizing in mitochondria and causing loss of mitochondrial membrane potential. May also modulate apoptosis by binding host CFLAR, a key regulator of the death-inducing signaling complex (DISC). Promotes viral transcription by using the host E3 ubiquitin ligase DDB1 to target the SMC5-SMC6 complex to proteasomal degradation. This host complex would otherwise bind to viral episomal DNA, and prevents its transcription. Moderately stimulates transcription of many different viral and cellular transcription elements. Promoters and enhancers stimulated by HBx contain DNA binding sites for NF-kappa-B, AP-1, AP-2, c-EBP, ATF/CREB, or the calcium-activated factor NF-AT. The sequence is that of Protein X from Hepatitis B virus genotype C subtype ayw (isolate China/Tibet127/2002) (HBV-C).